A 183-amino-acid chain; its full sequence is Ribosome rescue factor SmrB (183 aa).

The Smr domain maps to 98–173; that stretch reads LDLHGLTQKQ…GDAALLVLIE (76 aa).

Belongs to the SmrB family. As to quaternary structure, associates with collided ribosomes, but not with correctly translating polysomes.

Functionally, acts as a ribosome collision sensor. Detects stalled/collided disomes (pairs of ribosomes where the leading ribosome is stalled and a second ribosome has collided with it) and endonucleolytically cleaves mRNA at the 5' boundary of the stalled ribosome. Stalled/collided disomes form a new interface (primarily via the 30S subunits) that binds SmrB. Cleaved mRNA becomes available for tmRNA ligation, leading to ribosomal subunit dissociation and rescue of stalled ribosomes. The protein is Ribosome rescue factor SmrB of Erwinia tasmaniensis (strain DSM 17950 / CFBP 7177 / CIP 109463 / NCPPB 4357 / Et1/99).